The sequence spans 311 residues: Aspartate carbamoyltransferase catalytic subunit (311 aa).

2 residues coordinate carbamoyl phosphate: R55 and T56. K85 contacts L-aspartate. 3 residues coordinate carbamoyl phosphate: R106, H135, and Q138. Residues R168 and R230 each contribute to the L-aspartate site. Carbamoyl phosphate contacts are provided by L268 and P269.

Belongs to the aspartate/ornithine carbamoyltransferase superfamily. ATCase family. In terms of assembly, heterododecamer (2C3:3R2) of six catalytic PyrB chains organized as two trimers (C3), and six regulatory PyrI chains organized as three dimers (R2).

It catalyses the reaction carbamoyl phosphate + L-aspartate = N-carbamoyl-L-aspartate + phosphate + H(+). It functions in the pathway pyrimidine metabolism; UMP biosynthesis via de novo pathway; (S)-dihydroorotate from bicarbonate: step 2/3. Functionally, catalyzes the condensation of carbamoyl phosphate and aspartate to form carbamoyl aspartate and inorganic phosphate, the committed step in the de novo pyrimidine nucleotide biosynthesis pathway. The sequence is that of Aspartate carbamoyltransferase catalytic subunit from Buchnera aphidicola subsp. Schizaphis graminum (strain Sg).